The primary structure comprises 430 residues: Glutamate-1-semialdehyde 2,1-aminomutase (430 aa).

Residue K269 is modified to N6-(pyridoxal phosphate)lysine.

Belongs to the class-III pyridoxal-phosphate-dependent aminotransferase family. HemL subfamily. As to quaternary structure, homodimer. The cofactor is pyridoxal 5'-phosphate.

The protein localises to the cytoplasm. The enzyme catalyses (S)-4-amino-5-oxopentanoate = 5-aminolevulinate. Its pathway is porphyrin-containing compound metabolism; protoporphyrin-IX biosynthesis; 5-aminolevulinate from L-glutamyl-tRNA(Glu): step 2/2. The chain is Glutamate-1-semialdehyde 2,1-aminomutase from Desulfitobacterium hafniense (strain DSM 10664 / DCB-2).